The primary structure comprises 296 residues: Glycine N-acyltransferase (296 aa).

N6-acetyllysine; alternate is present on K16. K16 is subject to N6-succinyllysine; alternate. An N6-acetyllysine modification is found at K113. An N6-acetyllysine; alternate mark is found at K127 and K142. An N6-succinyllysine; alternate mark is found at K127 and K142. K159 bears the N6-acetyllysine mark. At K169 the chain carries N6-succinyllysine. N6-acetyllysine; alternate is present on residues K183 and K256. Residues K183 and K256 each carry the N6-succinyllysine; alternate modification. N6-succinyllysine is present on K267.

The protein belongs to the glycine N-acyltransferase family.

It is found in the mitochondrion. It catalyses the reaction an acyl-CoA + glycine = an N-acylglycine + CoA + H(+). The enzyme catalyses benzoyl-CoA + glycine = N-benzoylglycine + CoA + H(+). Functionally, mitochondrial acyltransferase which transfers an acyl group to the N-terminus of glycine and glutamine, although much less efficiently. Can conjugate a multitude of substrates to form a variety of N-acylglycines, thereby detoxify xenobiotics, such as benzoic acid or salicylic acid, and endogenous organic acids, such as isovaleric acid. The polypeptide is Glycine N-acyltransferase (Glyat) (Rattus norvegicus (Rat)).